The primary structure comprises 662 residues: Cytochrome bo(3) ubiquinol oxidase subunit 1 (662 aa).

The Extracellular segment spans residues Met1–Glu14. The helical transmembrane segment at Pro15 to Ile35 threads the bilayer. Over Thr36–Ser58 the chain is Cytoplasmic. A helical membrane pass occupies residues Ile59–Met79. Arg71, Asp75, and His98 together coordinate a ubiquinone. The Extracellular segment spans residues Arg80–His106. His106 serves as a coordination point for heme b. A helical membrane pass occupies residues Gly107–Ile127. Residues Pro128–Ser145 are Cytoplasmic-facing. Residues Phe146 to Ala166 traverse the membrane as a helical segment. The Extracellular segment spans residues Gln167 to Tyr189. Trp170 is a heme b binding site. A helical membrane pass occupies residues Trp190–Val210. Residues Thr211–Ser232 are Cytoplasmic-facing. A helical membrane pass occupies residues Leu233–Leu253. Residues Thr254 to Asn277 are Extracellular-facing. The helical transmembrane segment at Leu278 to Phe298 threads the bilayer. His284 is a Cu(2+) binding site. Residues His284 to Tyr288 constitute a cross-link (1'-histidyl-3'-tyrosine (His-Tyr)). Fe(II)-heme o is bound at residue Tyr288. Residues Ser299 to Arg309 lie on the Cytoplasmic side of the membrane. A helical transmembrane segment spans residues Leu310–Val330. Residues Trp331 to Thr346 lie on the Extracellular side of the membrane. Residues His333 and His334 each coordinate Cu(2+). Residues Phe347–Leu367 traverse the membrane as a helical segment. The Cytoplasmic segment spans residues Phe368–Ser380. The chain crosses the membrane as a helical span at residues Ile381–Leu401. Residues Ser402–Ser413 are Extracellular-facing. Fe(II)-heme o contacts are provided by His411 and His419. The chain crosses the membrane as a helical span at residues Leu414 to Ala434. His421 contributes to the heme b binding site. The Cytoplasmic segment spans residues Gly435–Ala456. Residues Phe457–Met477 form a helical membrane-spanning segment. Over Gly478–Met493 the chain is Extracellular. Heme b-binding residues include Arg481 and Arg482. Residues Leu494–Ile514 form a helical membrane-spanning segment. Residues Gln515 to His586 lie on the Cytoplasmic side of the membrane. A helical membrane pass occupies residues Met587–Ser607. A topological domain (extracellular) is located at residue Ala608. The helical transmembrane segment at Val609–Ile629 threads the bilayer. Residues Asn630–Lys662 lie on the Cytoplasmic side of the membrane.

This sequence belongs to the heme-copper respiratory oxidase family. In terms of assembly, the cytochrome bo(3) ubiquinol oxidase complex is a heterooctamer of two A chains, two B chains, two C chains and two D chains. It depends on Cu(2+) as a cofactor. Requires heme b as cofactor. Fe(II)-heme o serves as cofactor.

Its subcellular location is the cell membrane. The catalysed reaction is 2 a ubiquinol + O2 + n H(+)(in) = 2 a ubiquinone + 2 H2O + n H(+)(out). Its function is as follows. Cytochrome bo(3) ubiquinol oxidase is the terminal enzyme in the aerobic respiratory chain. Catalyzes the four-electron reduction of O2 to water, using a ubiquinol as a membrane soluble electron donor for molecular oxygen reduction. Has proton pump activity across the membrane in addition to electron transfer, pumping 2 protons/electron and generating a proton motive force. All the redox centers of this enzyme complex are located within the largest subunit, subunit I. Protons are probably pumped via D- and K- channels found in this subunit. The protein is Cytochrome bo(3) ubiquinol oxidase subunit 1 (cyoB) of Buchnera aphidicola subsp. Acyrthosiphon pisum (strain APS) (Acyrthosiphon pisum symbiotic bacterium).